The following is a 495-amino-acid chain: ESX-2 secretion system ATPase EccB2 (495 aa).

The chain crosses the membrane as a helical span at residues 43–63 (LALSMVLVAIAAGWMMLLNVL).

The protein belongs to the EccB family. In terms of assembly, part of the ESX-2 / type VII secretion system (T7SS), which is composed of cytosolic and membrane components.

The protein localises to the cell membrane. Its function is as follows. An ATPase. In Mycobacterium tuberculosis (strain CDC 1551 / Oshkosh), this protein is ESX-2 secretion system ATPase EccB2 (eccB2).